The chain runs to 285 residues: Bifunctional protein FolD (285 aa).

Residues 165 to 167 (GRS) and Ser190 contribute to the NADP(+) site.

Belongs to the tetrahydrofolate dehydrogenase/cyclohydrolase family. Homodimer.

It carries out the reaction (6R)-5,10-methylene-5,6,7,8-tetrahydrofolate + NADP(+) = (6R)-5,10-methenyltetrahydrofolate + NADPH. The catalysed reaction is (6R)-5,10-methenyltetrahydrofolate + H2O = (6R)-10-formyltetrahydrofolate + H(+). It functions in the pathway one-carbon metabolism; tetrahydrofolate interconversion. In terms of biological role, catalyzes the oxidation of 5,10-methylenetetrahydrofolate to 5,10-methenyltetrahydrofolate and then the hydrolysis of 5,10-methenyltetrahydrofolate to 10-formyltetrahydrofolate. In Staphylococcus carnosus (strain TM300), this protein is Bifunctional protein FolD.